Reading from the N-terminus, the 214-residue chain is Reticulon-3-B (214 aa).

The segment at 1–22 (MAETSGPQSSHISSSSAGDKGS) is disordered. In terms of domain architecture, Reticulon spans 26–214 (VRDLLYWRDV…LPGALKKKSE (189 aa)). 2 helical membrane passes run 46-66 (MVLL…YLVL) and 150-170 (TYIG…LLAF).

Homodimer.

It is found in the endoplasmic reticulum membrane. Its subcellular location is the golgi apparatus membrane. Functionally, may be involved in membrane trafficking in the early secretory pathway. The polypeptide is Reticulon-3-B (rtn3-b) (Xenopus laevis (African clawed frog)).